Reading from the N-terminus, the 427-residue chain is Histidinol dehydrogenase (427 aa).

The substrate site is built by S232, Q254, and H257. Residues Q254 and H257 each coordinate Zn(2+). Catalysis depends on proton acceptor residues E322 and H323. Residues H323, D356, E410, and H415 each coordinate substrate. D356 contributes to the Zn(2+) binding site. H415 provides a ligand contact to Zn(2+).

This sequence belongs to the histidinol dehydrogenase family. Requires Zn(2+) as cofactor.

It catalyses the reaction L-histidinol + 2 NAD(+) + H2O = L-histidine + 2 NADH + 3 H(+). It participates in amino-acid biosynthesis; L-histidine biosynthesis; L-histidine from 5-phospho-alpha-D-ribose 1-diphosphate: step 9/9. Functionally, catalyzes the sequential NAD-dependent oxidations of L-histidinol to L-histidinaldehyde and then to L-histidine. The polypeptide is Histidinol dehydrogenase (Listeria innocua serovar 6a (strain ATCC BAA-680 / CLIP 11262)).